Reading from the N-terminus, the 471-residue chain is 5-hydroxytryptamine receptor 2A (471 aa).

Over 1-80 (MDILCEENTS…LQEKNWSALL (80 aa)) the chain is Extracellular. N-linked (GlcNAc...) asparagine glycans are attached at residues Asn-8, Asn-38, Asn-44, Asn-51, and Asn-54. Residues 81–97 (TAVVIILTIAGNILVIM) form a helical membrane-spanning segment. The Cytoplasmic segment spans residues 98 to 111 (AVSLEKKLQNATNY). Residues 112-137 (FLMSLAIADMLLGFLVMPVSMLTILY) traverse the membrane as a helical segment. Topologically, residues 138 to 146 (GYRWPLPSK) are extracellular. The helical transmembrane segment at 147–171 (LCAVWIYLDVLFSTASIMHLCAISL) threads the bilayer. Cys-148 and Cys-227 are disulfide-bonded. Asp-155 lines the serotonin pocket. Residues 172-174 (DRY) carry the DRY motif; important for ligand-induced conformation changes motif. Residues 172–191 (DRYVAIQNPIHHSRFNSRTK) lie on the Cytoplasmic side of the membrane. The helical transmembrane segment at 192 to 215 (AFLKIIAVWTISVGISMPIPVFGL) threads the bilayer. Over 216-232 (QDDSKVFKEGSCLLADD) the chain is Extracellular. Residues 233–258 (NFVLIGSFVSFFIPLTIMVITYFLTI) traverse the membrane as a helical segment. The Cytoplasmic segment spans residues 259-322 (KSLQKEATLC…QSISNEQKAC (64 aa)). Ser-280 is modified (phosphoserine). A helical transmembrane segment spans residues 323 to 348 (KVLGIVFFLFVVMWCPFFITNIMAVI). Asn-343 contacts serotonin. Residues Cys-349 and Cys-353 are joined by a disulfide bond. The Extracellular segment spans residues 349–356 (CKESCNED). Residues 357–382 (VIGALLNVFVWIGYLSSAVNPLVYTL) form a helical membrane-spanning segment. The short motif at 376 to 380 (NPLVY) is the NPxxY motif; important for ligand-induced conformation changes and signaling element. Over 383-471 (FNKTYRSAFS…DGVNEKVSCV (89 aa)) the chain is Cytoplasmic. Positions 450-471 (KQHSEDASKDNSDGVNEKVSCV) are disordered. The segment covering 451 to 465 (QHSEDASKDNSDGVN) has biased composition (basic and acidic residues). The PDZ-binding signature appears at 469–471 (SCV).

The protein belongs to the G-protein coupled receptor 1 family. Interacts (via C-terminus) with MPDZ and PATJ. May interact (via C-terminus) with MPP3, PRDX6, DLG4, DLG1, CASK, APBA1 and MAGI2. Interacts with GRM2 and DRD2; this may affect signaling.

Its subcellular location is the cell membrane. The protein localises to the cell projection. The protein resides in the dendrite. It localises to the axon. It is found in the cytoplasmic vesicle. Its subcellular location is the membrane. The protein localises to the caveola. The protein resides in the presynapse. G-protein coupled receptor activity is regulated by lipids: oleamide increases HTR2A-mediated activity. In terms of biological role, G-protein coupled receptor for 5-hydroxytryptamine (serotonin). Also functions as a receptor for various drugs and psychoactive substances, including mescaline, psilocybin, 1-(2,5-dimethoxy-4-iodophenyl)-2-aminopropane (DOI) and lysergic acid diethylamide (LSD). Ligand binding causes a conformation change that triggers signaling via guanine nucleotide-binding proteins (G proteins) and modulates the activity of downstream effectors. HTR2A is coupled to G(q)/G(11) G alpha proteins and activates phospholipase C-beta, releasing diacylglycerol (DAG) and inositol 1,4,5-trisphosphate (IP3) second messengers that modulate the activity of phosphatidylinositol 3-kinase and promote the release of Ca(2+) ions from intracellular stores, respectively. Beta-arrestin family members inhibit signaling via G proteins and mediate activation of alternative signaling pathways. Affects neural activity, perception, cognition and mood. Plays a role in the regulation of behavior, including responses to anxiogenic situations and psychoactive substances. Plays a role in intestinal smooth muscle contraction, and may play a role in arterial vasoconstriction. The chain is 5-hydroxytryptamine receptor 2A (HTR2A) from Macaca mulatta (Rhesus macaque).